A 155-amino-acid chain; its full sequence is 3-hydroxyacyl-[acyl-carrier-protein] dehydratase FabZ (155 aa).

The active site involves histidine 54.

It belongs to the thioester dehydratase family. FabZ subfamily.

It localises to the cytoplasm. It carries out the reaction a (3R)-hydroxyacyl-[ACP] = a (2E)-enoyl-[ACP] + H2O. Functionally, involved in unsaturated fatty acids biosynthesis. Catalyzes the dehydration of short chain beta-hydroxyacyl-ACPs and long chain saturated and unsaturated beta-hydroxyacyl-ACPs. The protein is 3-hydroxyacyl-[acyl-carrier-protein] dehydratase FabZ of Burkholderia mallei (strain NCTC 10247).